The primary structure comprises 331 residues: NADH-quinone oxidoreductase subunit H (331 aa).

The next 8 helical transmembrane spans lie at 7–27 (ALVT…AVVI), 81–101 (MIFT…FAIV), 114–134 (IGIL…LFAG), 154–174 (ISYE…VGSF), 187–207 (VWFI…GVAV), 238–258 (FFVG…TLFF), 271–291 (WLSF…FILI), and 310–330 (VCLP…LAAA).

The protein belongs to the complex I subunit 1 family. In terms of assembly, NDH-1 is composed of 13 different subunits. Subunits NuoA, H, J, K, L, M, N constitute the membrane sector of the complex.

It localises to the cell inner membrane. The catalysed reaction is a quinone + NADH + 5 H(+)(in) = a quinol + NAD(+) + 4 H(+)(out). Its function is as follows. NDH-1 shuttles electrons from NADH, via FMN and iron-sulfur (Fe-S) centers, to quinones in the respiratory chain. The immediate electron acceptor for the enzyme in this species is believed to be ubiquinone. Couples the redox reaction to proton translocation (for every two electrons transferred, four hydrogen ions are translocated across the cytoplasmic membrane), and thus conserves the redox energy in a proton gradient. This subunit may bind ubiquinone. The chain is NADH-quinone oxidoreductase subunit H from Pseudomonas paraeruginosa (strain DSM 24068 / PA7) (Pseudomonas aeruginosa (strain PA7)).